The following is a 151-amino-acid chain: Ribosome maturation factor RimP (151 aa).

This sequence belongs to the RimP family.

Its subcellular location is the cytoplasm. Its function is as follows. Required for maturation of 30S ribosomal subunits. This Shewanella amazonensis (strain ATCC BAA-1098 / SB2B) protein is Ribosome maturation factor RimP.